Consider the following 160-residue polypeptide: Putative UPF0479 protein YLR466C-A (160 aa).

Helical transmembrane passes span 39–59 and 136–156; these read IVFCLPFFPALFLVPVQKVLQ and VPMIWLDVFQVFFVFLVISQH.

This sequence belongs to the UPF0479 family.

It localises to the membrane. This is Putative UPF0479 protein YLR466C-A from Saccharomyces cerevisiae (strain ATCC 204508 / S288c) (Baker's yeast).